Reading from the N-terminus, the 301-residue chain is Pseudouridine-5'-phosphate glycosidase (301 aa).

Glu23 acts as the Proton donor in catalysis. Residues Lys84 and Val104 each contribute to the substrate site. Asp136 lines the Mn(2+) pocket. Ser138–Asp140 lines the substrate pocket. Residue Lys157 is the Nucleophile of the active site.

Belongs to the pseudouridine-5'-phosphate glycosidase family. In terms of assembly, homotrimer. Mn(2+) serves as cofactor.

The enzyme catalyses D-ribose 5-phosphate + uracil = psi-UMP + H2O. Catalyzes the reversible cleavage of pseudouridine 5'-phosphate (PsiMP) to ribose 5-phosphate and uracil. Functions biologically in the cleavage direction, as part of a pseudouridine degradation pathway. The polypeptide is Pseudouridine-5'-phosphate glycosidase (Mycoplasmopsis agalactiae (strain NCTC 10123 / CIP 59.7 / PG2) (Mycoplasma agalactiae)).